The sequence spans 237 residues: Large ribosomal subunit protein uL1 (237 aa).

It belongs to the universal ribosomal protein uL1 family. Part of the 50S ribosomal subunit.

Functionally, binds directly to 23S rRNA. The L1 stalk is quite mobile in the ribosome, and is involved in E site tRNA release. In terms of biological role, protein L1 is also a translational repressor protein, it controls the translation of the L11 operon by binding to its mRNA. This is Large ribosomal subunit protein uL1 from Chloroflexus aggregans (strain MD-66 / DSM 9485).